The following is a 216-amino-acid chain: uncharacterized protein (216 aa).

In terms of domain architecture, Integrase catalytic spans 54 to 215 (TATQPNEKWT…SPVNYRTQSL (162 aa)).

Belongs to the transposase IS3/IS150/IS904 family.

This is an uncharacterized protein from Haemophilus influenzae (strain ATCC 51907 / DSM 11121 / KW20 / Rd).